A 512-amino-acid chain; its full sequence is Cytochrome P450 72A11 (512 aa).

A helical membrane pass occupies residues 2–22 (EISVASVTVSVAVVVVSWWVW). A heme-binding site is contributed by Cys460.

It belongs to the cytochrome P450 family. It depends on heme as a cofactor.

Its subcellular location is the membrane. This chain is Cytochrome P450 72A11 (CYP72A11), found in Arabidopsis thaliana (Mouse-ear cress).